The primary structure comprises 252 residues: GTP cyclohydrolase 1 type 2 homolog (252 aa).

A divalent metal cation is bound by residues His63, His64, Asp101, His220, and Glu224.

This sequence belongs to the GTP cyclohydrolase I type 2/NIF3 family. Homohexamer.

In Vibrio cholerae serotype O1 (strain ATCC 39315 / El Tor Inaba N16961), this protein is GTP cyclohydrolase 1 type 2 homolog.